The chain runs to 154 residues: SsrA-binding protein (154 aa).

Residues 130 to 154 form a disordered region; that stretch reads KLHDKRETERRRQDQRDIQRAIKRA. Over residues 133–154 the composition is skewed to basic and acidic residues; sequence DKRETERRRQDQRDIQRAIKRA.

Belongs to the SmpB family.

It is found in the cytoplasm. In terms of biological role, required for rescue of stalled ribosomes mediated by trans-translation. Binds to transfer-messenger RNA (tmRNA), required for stable association of tmRNA with ribosomes. tmRNA and SmpB together mimic tRNA shape, replacing the anticodon stem-loop with SmpB. tmRNA is encoded by the ssrA gene; the 2 termini fold to resemble tRNA(Ala) and it encodes a 'tag peptide', a short internal open reading frame. During trans-translation Ala-aminoacylated tmRNA acts like a tRNA, entering the A-site of stalled ribosomes, displacing the stalled mRNA. The ribosome then switches to translate the ORF on the tmRNA; the nascent peptide is terminated with the 'tag peptide' encoded by the tmRNA and targeted for degradation. The ribosome is freed to recommence translation, which seems to be the essential function of trans-translation. The chain is SsrA-binding protein from Synechococcus elongatus (strain ATCC 33912 / PCC 7942 / FACHB-805) (Anacystis nidulans R2).